Reading from the N-terminus, the 574-residue chain is Sulfate adenylyltransferase (574 aa).

The N-terminal stretch occupies residues 1 to 169 (MANTPHGGVL…IEAVNKLNHY (169 aa)). A catalytic region spans residues 170 to 394 (DYVALRYTPA…LRESNPPRAS (225 aa)). Q197 lines the sulfate pocket. Residues 197–200 (QTRN) and 291–294 (GRDH) contribute to the ATP site. Residues T198, R199, and N200 contribute to the active site. R199 provides a ligand contact to sulfate. A295 lines the sulfate pocket. Residue V333 coordinates ATP. An allosteric regulation domain; adenylyl-sulfate kinase-like region spans residues 395 to 574 (QGFTIFLTGY…LESEGYFERL (180 aa)). 3'-phosphoadenylyl sulfate is bound by residues 434-437 (DTVR), R451, 477-478 (IA), and R516.

This sequence in the N-terminal section; belongs to the sulfate adenylyltransferase family. The protein in the C-terminal section; belongs to the APS kinase family. In terms of assembly, homohexamer. Dimer of trimers.

The protein localises to the cytoplasm. The catalysed reaction is sulfate + ATP + H(+) = adenosine 5'-phosphosulfate + diphosphate. Its pathway is sulfur metabolism; hydrogen sulfide biosynthesis; sulfite from sulfate: step 1/3. Its activity is regulated as follows. Allosterically inhibited by 3'-phosphoadenosine 5'-phosphosulfate (PAPS). Functionally, catalyzes the first intracellular reaction of sulfate assimilation, forming adenosine-5'-phosphosulfate (APS) from inorganic sulfate and ATP. Plays an important role in sulfate activation as a component of the biosynthesis pathway of sulfur-containing amino acids. The chain is Sulfate adenylyltransferase from Aspergillus niger.